The primary structure comprises 1015 residues: Beta-galactosidase (1015 aa).

E434 functions as the Proton donor in the catalytic mechanism. Residue E513 is the Nucleophile of the active site.

It belongs to the glycosyl hydrolase 2 family. It depends on Mg(2+) as a cofactor. Mn(2+) is required as a cofactor.

It catalyses the reaction Hydrolysis of terminal non-reducing beta-D-galactose residues in beta-D-galactosides.. The chain is Beta-galactosidase (lacZ) from Arthrobacter sp. (strain B7).